The primary structure comprises 192 residues: Pyridoxal 5'-phosphate synthase subunit PdxT (192 aa).

46-48 (GES) provides a ligand contact to L-glutamine. Catalysis depends on cysteine 78, which acts as the Nucleophile. Residues arginine 106 and 135-136 (IR) contribute to the L-glutamine site. Catalysis depends on charge relay system residues histidine 171 and glutamate 173.

Belongs to the glutaminase PdxT/SNO family. As to quaternary structure, in the presence of PdxS, forms a dodecamer of heterodimers. Only shows activity in the heterodimer.

The enzyme catalyses aldehydo-D-ribose 5-phosphate + D-glyceraldehyde 3-phosphate + L-glutamine = pyridoxal 5'-phosphate + L-glutamate + phosphate + 3 H2O + H(+). The catalysed reaction is L-glutamine + H2O = L-glutamate + NH4(+). The protein operates within cofactor biosynthesis; pyridoxal 5'-phosphate biosynthesis. In terms of biological role, catalyzes the hydrolysis of glutamine to glutamate and ammonia as part of the biosynthesis of pyridoxal 5'-phosphate. The resulting ammonia molecule is channeled to the active site of PdxS. In Kosmotoga olearia (strain ATCC BAA-1733 / DSM 21960 / TBF 19.5.1), this protein is Pyridoxal 5'-phosphate synthase subunit PdxT.